The sequence spans 82 residues: RNA-binding protein TTE2299 (82 aa).

The protein belongs to the eukaryotic ribosomal protein eL8 family.

This chain is RNA-binding protein TTE2299, found in Caldanaerobacter subterraneus subsp. tengcongensis (strain DSM 15242 / JCM 11007 / NBRC 100824 / MB4) (Thermoanaerobacter tengcongensis).